The sequence spans 381 residues: tRNA pseudouridine synthase D (381 aa).

The active-site Nucleophile is the aspartate 81. Residues 160 to 335 (GMPNYFGSQR…TLGSRRFFWV (176 aa)) form the TRUD domain.

It belongs to the pseudouridine synthase TruD family.

It catalyses the reaction uridine(13) in tRNA = pseudouridine(13) in tRNA. Functionally, responsible for synthesis of pseudouridine from uracil-13 in transfer RNAs. This Helicobacter acinonychis (strain Sheeba) protein is tRNA pseudouridine synthase D.